The chain runs to 723 residues: Malate synthase G (723 aa).

Residues Val118, Arg125–Tyr126, Ser274, and Arg311 contribute to the acetyl-CoA site. The Proton acceptor role is filled by Arg338. Glyoxylate-binding positions include Arg338, Glu427, and Gly452–Asp455. Residues Glu427 and Asp455 each coordinate Mg(2+). Pro536 serves as a coordination point for acetyl-CoA. Cys617 bears the Cysteine sulfenic acid (-SOH) mark. Asp631 serves as the catalytic Proton donor. Cys688 carries the cysteine sulfenic acid (-SOH) modification.

The protein belongs to the malate synthase family. GlcB subfamily. Monomer. Requires Mg(2+) as cofactor.

The protein resides in the cytoplasm. It catalyses the reaction glyoxylate + acetyl-CoA + H2O = (S)-malate + CoA + H(+). It functions in the pathway carbohydrate metabolism; glyoxylate cycle; (S)-malate from isocitrate: step 2/2. Its function is as follows. Involved in the glycolate utilization. Catalyzes the condensation and subsequent hydrolysis of acetyl-coenzyme A (acetyl-CoA) and glyoxylate to form malate and CoA. The polypeptide is Malate synthase G (Shigella flexneri).